Consider the following 418-residue polypeptide: Tektin-1 (418 aa).

Coiled coils occupy residues asparagine 20–glutamate 107, glutamine 134–aspartate 177, asparagine 266–glycine 308, and valine 332–isoleucine 383.

Belongs to the tektin family. As to quaternary structure, microtubule inner protein component of sperm flagellar doublet microtubules. In terms of processing, ubiquitinated, leading to its degradation. Deubiquitinated by USP16, promoting its stability. Predominantly expressed in testis.

The protein localises to the cytoplasm. The protein resides in the cytoskeleton. Its subcellular location is the cilium axoneme. It is found in the flagellum axoneme. Its function is as follows. Microtubule inner protein (MIP) part of the dynein-decorated doublet microtubules (DMTs) in cilia and flagellar axoneme. Forms filamentous polymers in the walls of ciliary and flagellar microtubules. The chain is Tektin-1 (Tekt1) from Rattus norvegicus (Rat).